Reading from the N-terminus, the 342-residue chain is Protein pelota homolog (342 aa).

Belongs to the eukaryotic release factor 1 family. Pelota subfamily. In terms of assembly, monomer. Requires a divalent metal cation as cofactor.

It localises to the cytoplasm. In terms of biological role, may function in recognizing stalled ribosomes, interact with stem-loop structures in stalled mRNA molecules, and effect endonucleolytic cleavage of the mRNA. May play a role in the release non-functional ribosomes and degradation of damaged mRNAs. Has endoribonuclease activity. The protein is Protein pelota homolog of Methanocorpusculum labreanum (strain ATCC 43576 / DSM 4855 / Z).